Here is a 336-residue protein sequence, read N- to C-terminus: Tyrosine recombinase XerC (336 aa).

The 93-residue stretch at 14–106 folds into the Core-binding (CB) domain; that stretch reads VARCRWLEPF…SVKSFYRFLL (93 aa). Positions 127-330 constitute a Tyr recombinase domain; it reads KVPRFVSEEE…TFSRLKEIYD (204 aa). Residues Arg-183, Lys-207, His-282, Arg-285, and His-308 contribute to the active site. The O-(3'-phospho-DNA)-tyrosine intermediate role is filled by Tyr-317.

Belongs to the 'phage' integrase family. XerC subfamily. In terms of assembly, forms a cyclic heterotetrameric complex composed of two molecules of XerC and two molecules of XerD.

It is found in the cytoplasm. Site-specific tyrosine recombinase, which acts by catalyzing the cutting and rejoining of the recombining DNA molecules. The XerC-XerD complex is essential to convert dimers of the bacterial chromosome into monomers to permit their segregation at cell division. It also contributes to the segregational stability of plasmids. This chain is Tyrosine recombinase XerC, found in Chlorobaculum parvum (strain DSM 263 / NCIMB 8327) (Chlorobium vibrioforme subsp. thiosulfatophilum).